Consider the following 107-residue polypeptide: MPGRGKGGKGGKGYGKVGAKRHAKKALRETILGVTKPAIRRLARRGGVKRISSLVYEETRAVLKGFLESVIRDSVTYTEHAKRKTVTALDVVYALKRQGKTLYGFGG.

Gly residues predominate over residues 1–16 (MPGRGKGGKGGKGYGK). The interval 1–23 (MPGRGKGGKGGKGYGKVGAKRHA) is disordered. A DNA-binding region spans residues 17–21 (VGAKR).

The protein belongs to the histone H4 family. As to quaternary structure, the nucleosome is a histone octamer containing two molecules each of H2A, H2B, H3 and H4 assembled in one H3-H4 heterotetramer and two H2A-H2B heterodimers. The octamer wraps approximately 147 bp of DNA.

The protein localises to the nucleus. It localises to the chromosome. Functionally, core component of nucleosome. Nucleosomes wrap and compact DNA into chromatin, limiting DNA accessibility to the cellular machineries which require DNA as a template. Histones thereby play a central role in transcription regulation, DNA repair, DNA replication and chromosomal stability. DNA accessibility is regulated via a complex set of post-translational modifications of histones, also called histone code, and nucleosome remodeling. This chain is Histone H4, found in Euplotes crassus.